Consider the following 151-residue polypeptide: tRNA-specific adenosine deaminase (151 aa).

The 119-residue stretch at 4-122 (NRDSYWMKIA…PFLKKIFINL (119 aa)) folds into the CMP/dCMP-type deaminase domain. H55 lines the Zn(2+) pocket. The active-site Proton donor is E57. The Zn(2+) site is built by C85 and C88.

The protein belongs to the cytidine and deoxycytidylate deaminase family. In terms of assembly, homodimer. Requires Zn(2+) as cofactor.

It catalyses the reaction adenosine(34) in tRNA + H2O + H(+) = inosine(34) in tRNA + NH4(+). Its function is as follows. Catalyzes the deamination of adenosine to inosine at the wobble position 34 of tRNA(Arg2). The protein is tRNA-specific adenosine deaminase of Buchnera aphidicola subsp. Schizaphis graminum (strain Sg).